We begin with the raw amino-acid sequence, 68 residues long: DNA-directed RNA polymerase subunit omega (68 aa).

Belongs to the RNA polymerase subunit omega family. As to quaternary structure, the RNAP catalytic core consists of 2 alpha, 1 beta, 1 beta' and 1 omega subunit. When a sigma factor is associated with the core the holoenzyme is formed, which can initiate transcription.

The enzyme catalyses RNA(n) + a ribonucleoside 5'-triphosphate = RNA(n+1) + diphosphate. Its function is as follows. Promotes RNA polymerase assembly. Latches the N- and C-terminal regions of the beta' subunit thereby facilitating its interaction with the beta and alpha subunits. This chain is DNA-directed RNA polymerase subunit omega, found in Neisseria meningitidis serogroup C (strain 053442).